The chain runs to 105 residues: Large ribosomal subunit protein uL24 (105 aa).

The protein belongs to the universal ribosomal protein uL24 family. In terms of assembly, part of the 50S ribosomal subunit.

Its function is as follows. One of two assembly initiator proteins, it binds directly to the 5'-end of the 23S rRNA, where it nucleates assembly of the 50S subunit. In terms of biological role, one of the proteins that surrounds the polypeptide exit tunnel on the outside of the subunit. This Francisella philomiragia subsp. philomiragia (strain ATCC 25017 / CCUG 19701 / FSC 153 / O#319-036) protein is Large ribosomal subunit protein uL24.